A 299-amino-acid chain; its full sequence is Porphobilinogen deaminase (299 aa).

Cysteine 242 bears the S-(dipyrrolylmethanemethyl)cysteine mark.

Belongs to the HMBS family. As to quaternary structure, monomer. Dipyrromethane serves as cofactor.

It catalyses the reaction 4 porphobilinogen + H2O = hydroxymethylbilane + 4 NH4(+). It participates in porphyrin-containing compound metabolism; protoporphyrin-IX biosynthesis; coproporphyrinogen-III from 5-aminolevulinate: step 2/4. Tetrapolymerization of the monopyrrole PBG into the hydroxymethylbilane pre-uroporphyrinogen in several discrete steps. This chain is Porphobilinogen deaminase (hemC), found in Rickettsia prowazekii (strain Madrid E).